The primary structure comprises 402 residues: Nicotinate phosphoribosyltransferase (402 aa).

A Phosphohistidine; by autocatalysis modification is found at His224.

This sequence belongs to the NAPRTase family. Transiently phosphorylated on a His residue during the reaction cycle. Phosphorylation strongly increases the affinity for substrates and increases the rate of nicotinate D-ribonucleotide production. Dephosphorylation regenerates the low-affinity form of the enzyme, leading to product release.

It carries out the reaction nicotinate + 5-phospho-alpha-D-ribose 1-diphosphate + ATP + H2O = nicotinate beta-D-ribonucleotide + ADP + phosphate + diphosphate. It functions in the pathway cofactor biosynthesis; NAD(+) biosynthesis; nicotinate D-ribonucleotide from nicotinate: step 1/1. Functionally, catalyzes the synthesis of beta-nicotinate D-ribonucleotide from nicotinate and 5-phospho-D-ribose 1-phosphate at the expense of ATP. This is Nicotinate phosphoribosyltransferase from Neisseria gonorrhoeae (strain ATCC 700825 / FA 1090).